Reading from the N-terminus, the 309-residue chain is NAD kinase (309 aa).

Asp-89 serves as the catalytic Proton acceptor. Residues 89-90, 163-164, His-174, Arg-191, Asp-193, and 204-209 each bind NAD(+); these read DG, NE, and TAYSLS.

This sequence belongs to the NAD kinase family. The cofactor is a divalent metal cation.

It localises to the cytoplasm. It carries out the reaction NAD(+) + ATP = ADP + NADP(+) + H(+). In terms of biological role, involved in the regulation of the intracellular balance of NAD and NADP, and is a key enzyme in the biosynthesis of NADP. Catalyzes specifically the phosphorylation on 2'-hydroxyl of the adenosine moiety of NAD to yield NADP. The sequence is that of NAD kinase from Shewanella denitrificans (strain OS217 / ATCC BAA-1090 / DSM 15013).